Reading from the N-terminus, the 463-residue chain is Type IV secretion system protein PtlD (463 aa).

A signal peptide spans 1–24; it reads MAGLSRILLSCTLACLLAGQAAQA. 5 helical membrane passes run 118-138, 232-252, 253-273, 294-314, and 333-353; these read LQPL…YALL, WLLC…LAAS, LLIV…LFLV, ALVF…VLAG, and MLAA…VPLA. Low complexity predominate over residues 376–410; that stretch reads AHRQAAARQYAPRPAAAAAAAGPHQAGTYAASATP. Residues 376-463 are disordered; that stretch reads AHRQAAARQY…RVLPRKPNLP (88 aa). Positions 411-420 are enriched in pro residues; that stretch reads APAPARPAPS. The segment covering 441-455 has biased composition (basic and acidic residues); sequence VRRDDRPAPAPDRRV.

Its subcellular location is the cell membrane. Its function is as follows. Component of the type IV secretion system ptl required for secretion of assembled pertussis toxin (PTX) through the outer membrane. This is Type IV secretion system protein PtlD (ptlD) from Bordetella pertussis (strain Tohama I / ATCC BAA-589 / NCTC 13251).